The sequence spans 666 residues: Probable potassium transport system protein Kup (666 aa).

The next 12 membrane-spanning stretches (helical) occupy residues 16–36 (GFII…LYTM), 58–78 (ISLI…LIAL), 100–120 (PWLI…GALT), 141–161 (IYQN…VLFG), 165–185 (FGTG…FSFL), 221–241 (IFIL…YSDL), 253–273 (WPFV…WILA), 294–314 (VYLV…LISG), 343–363 (LYIP…VLAF), 373–393 (YGLA…YYLI), 399–419 (PILA…FFLA), and 424–444 (FMHG…VMFI).

It belongs to the HAK/KUP transporter (TC 2.A.72) family.

The protein resides in the cell membrane. It carries out the reaction K(+)(in) + H(+)(in) = K(+)(out) + H(+)(out). Functionally, transport of potassium into the cell. Likely operates as a K(+):H(+) symporter. In Streptococcus pyogenes serotype M49 (strain NZ131), this protein is Probable potassium transport system protein Kup.